Here is a 464-residue protein sequence, read N- to C-terminus: Protein FAM90A8 (464 aa).

Disordered stretches follow at residues 1–42, 69–389, and 415–437; these read MMAR…DPRL, VPAT…HDGA, and HSPEKPGAFLAQSPHVSEKSEAP. Composition is skewed to basic and acidic residues over residues 74 to 89 and 97 to 114; these read GKKEGKENLKPWKPRG and NKDKGEKEERPRQQDPQR. Positions 180 to 197 are enriched in low complexity; that stretch reads LASLSPLRKASLSSSSSL.

It belongs to the FAM90 family.

The sequence is that of Protein FAM90A8 (FAM90A8) from Homo sapiens (Human).